Consider the following 479-residue polypeptide: ATP-dependent RNA helicase DbpA (479 aa).

The Q motif signature appears at 2 to 30 (SHFKNYQISHDILRALEGLGYTEPTKVQQ). A Helicase ATP-binding domain is found at 33-203 (IPAALERKDL…RQYMQNPEHI (171 aa)). 46 to 53 (SQTGSGKT) lines the ATP pocket. Positions 151 to 154 (DEAD) match the DEAD box motif. Positions 214 to 374 (NIEHAVIQVR…KIEAPSQEEV (161 aa)) constitute a Helicase C-terminal domain. An involved in 23S rRNA binding region spans residues 404 to 479 (MKLYFNGGKK…KQLKVNKANK (76 aa)).

It belongs to the DEAD box helicase family. DbpA subfamily. As to quaternary structure, may interact with RNA helicases CshA and CshB.

It localises to the cytoplasm. It catalyses the reaction ATP + H2O = ADP + phosphate + H(+). Its activity is regulated as follows. ATPase activity is stimulated by interaction with RNA. In terms of biological role, DEAD-box RNA helicase involved in the assembly of the 50S ribosomal subunit. Has an RNA-dependent ATPase activity, which is specific for 23S rRNA, and a 3' to 5' RNA helicase activity that uses the energy of ATP hydrolysis to destabilize and unwind short rRNA duplexes. This chain is ATP-dependent RNA helicase DbpA, found in Bacillus subtilis (strain 168).